The primary structure comprises 176 residues: 3-hydroxydecanoyl-[acyl-carrier-protein] dehydratase (176 aa).

The active site involves histidine 70.

The protein belongs to the thioester dehydratase family. FabA subfamily. As to quaternary structure, homodimer.

It localises to the cytoplasm. It carries out the reaction a (3R)-hydroxyacyl-[ACP] = a (2E)-enoyl-[ACP] + H2O. The enzyme catalyses (3R)-hydroxydecanoyl-[ACP] = (2E)-decenoyl-[ACP] + H2O. It catalyses the reaction (2E)-decenoyl-[ACP] = (3Z)-decenoyl-[ACP]. It participates in lipid metabolism; fatty acid biosynthesis. Functionally, necessary for the introduction of cis unsaturation into fatty acids. Catalyzes the dehydration of (3R)-3-hydroxydecanoyl-ACP to E-(2)-decenoyl-ACP and then its isomerization to Z-(3)-decenoyl-ACP. Can catalyze the dehydratase reaction for beta-hydroxyacyl-ACPs with saturated chain lengths up to 16:0, being most active on intermediate chain length. The protein is 3-hydroxydecanoyl-[acyl-carrier-protein] dehydratase of Alkalilimnicola ehrlichii (strain ATCC BAA-1101 / DSM 17681 / MLHE-1).